The sequence spans 41 residues: Disintegrin viperistatin (41 aa).

Disulfide bonds link C1–C10, C6–C29, C7–C34, and C19–C36. Positions 1–41 (CTTGPCCRQCKLKPAGTTCWKTSRTSHYCTGKSCDCPVYQG) constitute a Disintegrin domain. The Cell attachment site; atypical (KTS) motif lies at 21 to 23 (KTS).

Monomer. In terms of tissue distribution, expressed by the venom gland.

The protein resides in the secreted. Potent and highly selective inhibitor of alpha-1/beta-1 (ITGA1/ITGB1) integrin binding to collagen I and IV. Is about 25-fold more potent than obtustatin inhibiting the binding of this integrin to collagen IV. The chain is Disintegrin viperistatin from Daboia palaestinae (Palestine viper).